The sequence spans 156 residues: Transmembrane protein 50 homolog (156 aa).

The next 4 helical transmembrane spans lie at Ile-5–Ile-25, Ile-45–Ile-65, Val-87–Met-107, and Pro-124–Phe-144.

Belongs to the UPF0220 family.

Its subcellular location is the membrane. The chain is Transmembrane protein 50 homolog (tmem50) from Dictyostelium discoideum (Social amoeba).